We begin with the raw amino-acid sequence, 202 residues long: MSRYRGPRVRIIRRLGTLPGLTNKIPQLKSSSINQSTSNKKISQYRIRLEEKQKLRFHYGITERQLLNYVRIARKAKGSTGEVLLQLLEMRLDNIIFRLGMAPTIPGARQLVNHRHILVNDCIVNIPSYRCKPQDFITIKNQRKSEAIISKNIEFYQNSKIPNHLTYSSLEKKGLVNQILDRESIGLKINELLVVEYYSRQA.

The S4 RNA-binding domain occupies 90–153 (MRLDNIIFRL…KSEAIISKNI (64 aa)).

This sequence belongs to the universal ribosomal protein uS4 family. As to quaternary structure, part of the 30S ribosomal subunit. Contacts protein S5. The interaction surface between S4 and S5 is involved in control of translational fidelity.

Its subcellular location is the plastid. It localises to the chloroplast. Functionally, one of the primary rRNA binding proteins, it binds directly to 16S rRNA where it nucleates assembly of the body of the 30S subunit. With S5 and S12 plays an important role in translational accuracy. The chain is Small ribosomal subunit protein uS4c (rps4) from Leucodon sciuroides (Moss).